A 39-amino-acid chain; its full sequence is MKVRPSVKTMCEHCKIIRRKGRVMVICSANPKHKQRQGK.

The protein belongs to the bacterial ribosomal protein bL36 family.

The sequence is that of Large ribosomal subunit protein bL36 from Pediococcus pentosaceus (strain ATCC 25745 / CCUG 21536 / LMG 10740 / 183-1w).